A 429-amino-acid chain; its full sequence is Serine/threonine-protein kinase BGLF4 (429 aa).

The tract at residues 1 to 27 is disordered; the sequence is MDVNMAAELSPTNSSSSGELSVSPEPP. Positions 1–409 constitute a Protein kinase domain; it reads MDVNMAAELS…CRPRFEHPHL (409 aa). Low complexity predominate over residues 14–23; that stretch reads SSSSGELSVS. The SUMO interaction motif stretch occupies residues 36–40; that stretch reads KVTVI. ATP-binding positions include 110–118 and glutamate 128; that span reads LYHELMVCD. Catalysis depends on aspartate 195, which acts as the Proton acceptor. The tract at residues 344-350 is SUMO interaction motif; the sequence is VVLLEVL.

This sequence belongs to the protein kinase superfamily. Ser/Thr protein kinase family. In terms of assembly, interacts with host NUP62 and NUP153; this interaction plays a role in nuclear targeting of BGLF4. Interacts with host SUMO1 and SUMO2.

It localises to the virion tegument. It is found in the host nucleus. It catalyses the reaction L-seryl-[protein] + ATP = O-phospho-L-seryl-[protein] + ADP + H(+). The enzyme catalyses L-threonyl-[protein] + ATP = O-phospho-L-threonyl-[protein] + ADP + H(+). Plays many key roles by phosphorylating several proteins including the viral DNA processivity factor BMRF1, EBNA1 or EBNA2. Modifies the host nuclear envelope structure and induces the redistribution of nuclear envelope-associated proteins by phosphorylating host nucleoporins. Subsequently, promotes the nuclear transport of EBV lytic proteins. Required for efficient lytic DNA replication and release of nucleocapsids from the nucleus. Contributes to the compaction of host cell chromatin in cells undergoing lytic replication, presumably by phosphorylating the host condensin complex and host TOP2A. Induces disassembly of the nuclear lamina by phosphorylating with host LMNA. Phosphorylates substrates involved in capsid assembly and DNA packaging. Facilitates the switch from latent to lytic DNA replication by down-regulating EBNA1 replication function. Phosphorylates the viral immediate-early protein BZLF1 and inhibits its sumoylation by interacting with host SUMO1 and SUMO2. Phosphorylates also host SAMHD1 and thereby counteracts its antiviral effect by reducing its dNTP hydrolase activity. This chain is Serine/threonine-protein kinase BGLF4, found in Epstein-Barr virus (strain AG876) (HHV-4).